The primary structure comprises 683 residues: Transforming growth factor-beta-induced protein ig-h3 (683 aa).

Residues 1-23 (MALLGRLLPLALALALGPAATHA) form the signal peptide. Ser37 is subject to Phosphoserine. The region spanning 45–99 (GPNVCAVQKLIGTNKKYFTNCKQWYQRKICGKSTVISYECCPGYEKVPGEKGCPA) is the EMI domain. 5 disulfide bridges follow: Cys49-Cys85, Cys74-Cys339, Cys84-Cys97, Cys214-Cys317, and Cys473-Cys478. Cys65 carries the S-cysteinyl cysteine modification. 4 consecutive FAS1 domains span residues 103-236 (LSNL…DKVI), 240-371 (TNNI…DELL), 375-498 (SAKT…DRML), and 502-632 (MGTV…NTVL). The short motif at 642–644 (RGD) is the Cell attachment site element.

Binds to type I, II, and IV collagens. Gamma-carboxyglutamated; gamma-carboxyglutamate residues are formed by vitamin K dependent carboxylation; these residues may be required for binding to calcium. According to a report, does not contain any vitamin K-dependent gamma-carboxyglutamate residues. Post-translationally, the EMI domain contains 2 expected intradomain disulfide bridges (Cys-49-Cys85 and Cys-84-Cys-97) and one unusual interdomain disulfide bridge to the second FAS1 domain (Cys-74-Cys-339). This arrangement violates the predicted disulfide bridge pattern of an EMI domain. In terms of tissue distribution, widely distributed in various tissues except for the brain. High levels in corneal epithelium.

The protein localises to the secreted. It is found in the extracellular space. It localises to the extracellular matrix. Its function is as follows. Plays a role in cell adhesion. May play a role in cell-collagen interactions. The protein is Transforming growth factor-beta-induced protein ig-h3 (TGFBI) of Sus scrofa (Pig).